A 407-amino-acid chain; its full sequence is Putative ammonium transporter MTH_661 (407 aa).

The next 12 membrane-spanning stretches (helical) occupy residues Ala9–Phe29, Phe47–Gly67, Val70–Ser90, Phe101–Val121, Trp129–Trp149, Phe162–Val182, Leu196–Gly216, Ala226–Met246, Leu257–Val277, Ile279–Trp299, Val312–Val332, and Ile357–Leu377.

Belongs to the ammonia transporter channel (TC 1.A.11.2) family.

The protein localises to the cell membrane. This chain is Putative ammonium transporter MTH_661, found in Methanothermobacter thermautotrophicus (strain ATCC 29096 / DSM 1053 / JCM 10044 / NBRC 100330 / Delta H) (Methanobacterium thermoautotrophicum).